Consider the following 235-residue polypeptide: MRSQIYRSATKAARSFLSSSKNASSRFLPEGRTVAATAAVSLRVKAPYLASFGGANASGTWMSTALAIPAAAYLLQDQEACAAEFERTFIAIKPDGVQRGLISEIVARFERKGFKLVAIKVVIPSKDFAQKHYHDLSERPFFNGLCDFLSSGPVVAMVWEGEGVIKYGRKLIGATDPQKSEPGTIRGDLAVVVGRNIIHGSDGPETAKDEIKLWFKPEELVNYTHNAEKWIYGDN.

Residues Lys93, Phe141, Arg169, Thr175, Arg186, and Asn196 each contribute to the ATP site. Catalysis depends on His199, which acts as the Pros-phosphohistidine intermediate.

Belongs to the NDK family. Homohexamer. The cofactor is Mg(2+).

The protein resides in the plastid. Its subcellular location is the chloroplast thylakoid lumen. It catalyses the reaction a 2'-deoxyribonucleoside 5'-diphosphate + ATP = a 2'-deoxyribonucleoside 5'-triphosphate + ADP. The catalysed reaction is a ribonucleoside 5'-diphosphate + ATP = a ribonucleoside 5'-triphosphate + ADP. Its function is as follows. Major role in the synthesis of nucleoside triphosphates other than ATP. The ATP gamma phosphate is transferred to the NDP beta phosphate via a ping-pong mechanism, using a phosphorylated active-site intermediate. Shows the highest specificity towards GDP. The sequence is that of Nucleoside diphosphate kinase 4, chloroplastic (NDK4) from Spinacia oleracea (Spinach).